Here is a 522-residue protein sequence, read N- to C-terminus: GMP synthase [glutamine-hydrolyzing] (522 aa).

The Glutamine amidotransferase type-1 domain maps to 9-204; sequence KILILDFGAQ…VVDICGCQML (196 aa). The active-site Nucleophile is the C86. Active-site residues include H178 and E180. The 193-residue stretch at 205-397 folds into the GMPS ATP-PPase domain; that stretch reads WTAANIIEDQ…LGLPHAMVYR (193 aa). 232–238 contributes to the ATP binding site; the sequence is SGGVDSS.

In terms of assembly, homodimer.

It carries out the reaction XMP + L-glutamine + ATP + H2O = GMP + L-glutamate + AMP + diphosphate + 2 H(+). It participates in purine metabolism; GMP biosynthesis; GMP from XMP (L-Gln route): step 1/1. Its function is as follows. Catalyzes the synthesis of GMP from XMP. The chain is GMP synthase [glutamine-hydrolyzing] (guaA) from Xylella fastidiosa (strain 9a5c).